The primary structure comprises 338 residues: Malate dehydrogenase, mitochondrial (338 aa).

The transit peptide at 1-24 (MLSALARPASAVLRRSFSTSAQNN) directs the protein to the mitochondrion. Residues 31–37 (GASGGIG) and Asp57 contribute to the NAD(+) site. Ser33 carries an O-linked (GlcNAc) serine glycan. N6-acetyllysine; alternate is present on residues Lys78 and Lys91. N6-succinyllysine; alternate is present on residues Lys78 and Lys91. 2 residues coordinate substrate: Arg104 and Arg110. Residues Asn117 and 140 to 142 (IAN) contribute to the NAD(+) site. Asn142 is a substrate binding site. Lys165 is subject to N6-acetyllysine. Position 176 (Arg176) interacts with substrate. Lys185 carries the post-translational modification N6-acetyllysine; alternate. Lys185 is modified (N6-succinyllysine; alternate). Catalysis depends on His200, which acts as the Proton acceptor. An N6-succinyllysine modification is found at Lys203. N6-acetyllysine; alternate is present on residues Lys215 and Lys239. 2 positions are modified to N6-succinyllysine; alternate: Lys215 and Lys239. Residue Lys239 is modified to N6-malonyllysine; alternate. Position 246 is a phosphoserine (Ser246). Met251 lines the NAD(+) pocket. Lys269 is modified (N6-succinyllysine). N6-acetyllysine; alternate occurs at positions 296, 301, 307, 314, and 324. An N6-succinyllysine; alternate mark is found at Lys296, Lys301, Lys307, Lys314, and Lys324. At Lys307 the chain carries N6-malonyllysine; alternate. The residue at position 326 (Ser326) is a Phosphoserine. 3 positions are modified to N6-acetyllysine; alternate: Lys328, Lys329, and Lys335. Position 328 is an N6-succinyllysine; alternate (Lys328). Residue Lys329 is modified to N6-malonyllysine; alternate. Lys335 carries the post-translational modification N6-succinyllysine; alternate.

It belongs to the LDH/MDH superfamily. MDH type 1 family. In terms of assembly, homodimer. Acetylation is enhanced after treatment either with trichostin A (TCA) or with nicotinamide (NAM) with the appearance of tri- and tetraacetylations. Glucose also increases acetylation.

Its subcellular location is the mitochondrion matrix. It catalyses the reaction (S)-malate + NAD(+) = oxaloacetate + NADH + H(+). With respect to regulation, enzyme activity is enhanced by acetylation. The sequence is that of Malate dehydrogenase, mitochondrial (MDH2) from Pongo abelii (Sumatran orangutan).